Reading from the N-terminus, the 100-residue chain is MDFSQLGGLLDGMKKEFSQLEEKNKDTIHTSKSGGGMVSVSFNGVGELVDLQIDDSLLEDKEAMQIYLMSALNDGYKAVEENRKNLAFNMLGNLGNFAKL.

It belongs to the YbaB/EbfC family. As to quaternary structure, homodimer.

It localises to the cytoplasm. It is found in the nucleoid. Its function is as follows. Binds to DNA and alters its conformation. May be involved in regulation of gene expression, nucleoid organization and DNA protection. The sequence is that of Nucleoid-associated protein HPSH_00175 from Helicobacter pylori (strain Shi470).